The primary structure comprises 89 residues: Co-chaperonin GroES (89 aa).

Belongs to the GroES chaperonin family. Heptamer of 7 subunits arranged in a ring. Interacts with the chaperonin GroEL.

It localises to the cytoplasm. Functionally, together with the chaperonin GroEL, plays an essential role in assisting protein folding. The GroEL-GroES system forms a nano-cage that allows encapsulation of the non-native substrate proteins and provides a physical environment optimized to promote and accelerate protein folding. GroES binds to the apical surface of the GroEL ring, thereby capping the opening of the GroEL channel. This chain is Co-chaperonin GroES, found in Wolinella succinogenes (strain ATCC 29543 / DSM 1740 / CCUG 13145 / JCM 31913 / LMG 7466 / NCTC 11488 / FDC 602W) (Vibrio succinogenes).